An 837-amino-acid chain; its full sequence is Putative outer membrane protein assembly factor TP_0326 (837 aa).

Residues M1–A21 form the signal peptide. The Periplasmic segment spans residues Q22–A433. POTRA domains follow at residues K31–R105, P106–G182, T185–G273, Y276–R354, and S357–Q430. The beta stranded transmembrane segment at N434 to S442 threads the bilayer. The Extracellular; loop L1 segment spans residues G443–F450. Residues P451–K461 traverse the membrane as a beta stranded segment. The Periplasmic segment spans residues N462–N468. The chain crosses the membrane as a beta stranded span at residues E469–L476. At G477 to S478 the chain is on the extracellular; loop L2 side. A beta stranded transmembrane segment spans residues E479–E489. Residues R490–V499 lie on the Periplasmic side of the membrane. The beta stranded transmembrane segment at G500–N520 threads the bilayer. Residues G521–E530 are Extracellular; loop L3-facing. Residues Q531–R543 traverse the membrane as a beta stranded segment. Residues L544–G554 lie on the Periplasmic side of the membrane. The beta stranded transmembrane segment at A555–I568 threads the bilayer. Residues R569 to W601 lie on the Extracellular; loop L4 side of the membrane. Residues T602–G615 traverse the membrane as a beta stranded segment. The Periplasmic portion of the chain corresponds to R616–S623. Residues S624 to G636 traverse the membrane as a beta stranded segment. At L637–E644 the chain is on the extracellular; loop L5 side. A beta stranded transmembrane segment spans residues H645–T658. Topologically, residues L659–V667 are periplasmic. Residues W668 to V682 form a beta stranded membrane-spanning segment. Residues Q683–G724 lie on the Extracellular; loop L6 side of the membrane. A beta stranded membrane pass occupies residues D725 to W736. Residues P737–G741 lie on the Periplasmic side of the membrane. Residues I742–N756 form a beta stranded membrane-spanning segment. The Extracellular; loop L7 segment spans residues I757–G786. The interval S761 to E785 is disordered. A compositionally biased stretch (low complexity) spans S765–S784. A beta stranded transmembrane segment spans residues L787–T799. Residues L800 to Q802 lie on the Periplasmic side of the membrane. The beta stranded transmembrane segment at F803–T814 threads the bilayer. Residues S815–K824 are Extracellular; loop L8-facing. Residues N825–V829 form a beta stranded membrane-spanning segment. The Periplasmic portion of the chain corresponds to L830–L837.

Belongs to the BamA family. In terms of assembly, part of 2 complexes of about 239 and 164 kDa.

The protein localises to the cell outer membrane. Functionally, might be part of the outer membrane protein assembly complex, which is involved in assembly and insertion of beta-barrel proteins into the outer membrane. Both rabbit immune serum and rabbit antiserum specific for extracytoplasmic loop L4 promote bacteria internalization by rabbit peritoneal macrophages. Pools of human syphilitic sera from the USA and Columbia recognize both the N-terminal POTRA-containing and C-terminal beta-barrel domains as well as loop L4, showing this protein stimulates the immune system in both humans and rabbits. The chain is Putative outer membrane protein assembly factor TP_0326 (tp92) from Treponema pallidum (strain Nichols).